Here is a 436-residue protein sequence, read N- to C-terminus: Xaa-Arg dipeptidase (436 aa).

The protein belongs to the peptidase M20A family.

It catalyses the reaction beta-alanyl-L-lysine + H2O = beta-alanine + L-lysine. It carries out the reaction beta-alanyl-L-ornithine + H2O = beta-alanine + L-ornithine. The catalysed reaction is N(2)-(4-aminobutanoyl)-L-lysine + H2O = 4-aminobutanoate + L-lysine. The enzyme catalyses N(2)-(4-aminobutanoyl)-L-ornithine + H2O = 4-aminobutanoate + L-ornithine. It catalyses the reaction N(2)-(4-aminobutanoyl)-L-arginine + H2O = 4-aminobutanoate + L-arginine. In terms of biological role, catalyzes the peptide bond hydrolysis in dipeptides having basic amino acids lysine, ornithine or arginine at C-terminus. Postulated to function in a metabolite repair mechanism by eliminating alternate dipeptide by-products formed during carnosine synthesis. The chain is Xaa-Arg dipeptidase from Homo sapiens (Human).